A 174-amino-acid chain; its full sequence is Ribosome maturation factor RimM (174 aa).

Positions 97 to 169 (GNKFYFHEVI…KVVMDLPEGL (73 aa)) constitute a PRC barrel domain.

The protein belongs to the RimM family. Binds ribosomal protein uS19.

The protein resides in the cytoplasm. Functionally, an accessory protein needed during the final step in the assembly of 30S ribosomal subunit, possibly for assembly of the head region. Essential for efficient processing of 16S rRNA. May be needed both before and after RbfA during the maturation of 16S rRNA. It has affinity for free ribosomal 30S subunits but not for 70S ribosomes. The sequence is that of Ribosome maturation factor RimM from Flavobacterium psychrophilum (strain ATCC 49511 / DSM 21280 / CIP 103535 / JIP02/86).